A 373-amino-acid chain; its full sequence is Superinfection exclusion protein (373 aa).

The N-terminal stretch at 1–15 (MIVLLILSLACTAFT) is a signal peptide.

The protein belongs to the serpin family. Orthopoxvirus OPG040 subfamily. In terms of assembly, interacts with A56 protein.

It is found in the virion membrane. Its subcellular location is the host cell membrane. Functionally, prevents cell to cell fusion via its interaction with A56 protein. The A56-K2 complex associates with components of the entry fusion complex (EFC) presumably to avoid superinfection and syncytium formation. The sequence is that of Superinfection exclusion protein (OPG040) from Homo sapiens (Human).